The following is a 620-amino-acid chain: Chaperone protein HscA homolog (620 aa).

It belongs to the heat shock protein 70 family.

Functionally, chaperone involved in the maturation of iron-sulfur cluster-containing proteins. Has a low intrinsic ATPase activity which is markedly stimulated by HscB. In Shewanella sp. (strain MR-4), this protein is Chaperone protein HscA homolog.